The chain runs to 372 residues: Chorismate synthase (372 aa).

Positions 48 and 54 each coordinate NADP(+). FMN-binding positions include 125 to 127, 238 to 239, glycine 278, 293 to 297, and arginine 319; these read RSS, NA, and KPTSS.

Belongs to the chorismate synthase family. As to quaternary structure, homotetramer. FMNH2 serves as cofactor.

The enzyme catalyses 5-O-(1-carboxyvinyl)-3-phosphoshikimate = chorismate + phosphate. Its pathway is metabolic intermediate biosynthesis; chorismate biosynthesis; chorismate from D-erythrose 4-phosphate and phosphoenolpyruvate: step 7/7. In terms of biological role, catalyzes the anti-1,4-elimination of the C-3 phosphate and the C-6 proR hydrogen from 5-enolpyruvylshikimate-3-phosphate (EPSP) to yield chorismate, which is the branch point compound that serves as the starting substrate for the three terminal pathways of aromatic amino acid biosynthesis. This reaction introduces a second double bond into the aromatic ring system. In Xylella fastidiosa (strain M23), this protein is Chorismate synthase.